We begin with the raw amino-acid sequence, 318 residues long: uncharacterized protein (318 aa).

Belongs to the NAD(P)-dependent epimerase/dehydratase family.

This is an uncharacterized protein from Staphylococcus haemolyticus (strain JCSC1435).